The sequence spans 346 residues: D-alanine--D-alanine ligase (346 aa).

Residues 133–326 enclose the ATP-grasp domain; sequence KFLAQKAGVK…LANSLPKERE (194 aa). 159 to 209 contacts ATP; that stretch reads YPIILKPARLGSSIGVSVVHDDSELAYAKDVAFEFDKDVLVEPFIKGVKEY. Mg(2+) is bound by residues Asp-282, Glu-294, and Asn-296.

It belongs to the D-alanine--D-alanine ligase family. It depends on Mg(2+) as a cofactor. Mn(2+) serves as cofactor.

The protein localises to the cytoplasm. It catalyses the reaction 2 D-alanine + ATP = D-alanyl-D-alanine + ADP + phosphate + H(+). Its pathway is cell wall biogenesis; peptidoglycan biosynthesis. In terms of biological role, cell wall formation. The polypeptide is D-alanine--D-alanine ligase (Campylobacter concisus (strain 13826)).